A 66-amino-acid chain; its full sequence is Cytochrome c oxidase subunit 26, mitochondrial (66 aa).

The transit peptide at 1-8 directs the protein to the mitochondrion; that stretch reads MFFSQVLR. Residues 9 to 27 lie on the Mitochondrial matrix side of the membrane; sequence SSARAAPIKRYTGGRIGES. Residues 28 to 64 form a helical membrane-spanning segment; sequence WVITEGRRLIPEIFQWSAVLSVCLGWPGAVYFFSKAR. At 65-66 the chain is on the mitochondrial intermembrane side; sequence KA.

This sequence belongs to the fungal cytochrome c oxidase subunit 26 family. In terms of assembly, component of the cytochrome c oxidase (complex IV, CIV), a multisubunit enzyme composed of 12 subunits. The complex is composed of a catalytic core of 3 subunits COX1, COX2 and COX3, encoded in the mitochondrial DNA, and 9 supernumerary subunits COX4, COX5A (or COX5B), COX6, COX7, COX8, COX9, COX12, COX13 and COX26, which are encoded in the nuclear genome. The complex exists as a monomer or a dimer and forms supercomplexes (SCs) in the inner mitochondrial membrane with a dimer of ubiquinol-cytochrome c oxidoreductase (cytochrome b-c1 complex, complex III, CIII), resulting in 2 different assemblies (supercomplexes III(2)IV and III(2)IV(2)).

Its subcellular location is the mitochondrion inner membrane. Component of the cytochrome c oxidase, the last enzyme in the mitochondrial electron transport chain which drives oxidative phosphorylation. The respiratory chain contains 3 multisubunit complexes succinate dehydrogenase (complex II, CII), ubiquinol-cytochrome c oxidoreductase (cytochrome b-c1 complex, complex III, CIII) and cytochrome c oxidase (complex IV, CIV), that cooperate to transfer electrons derived from NADH and succinate to molecular oxygen, creating an electrochemical gradient over the inner membrane that drives transmembrane transport and the ATP synthase. Cytochrome c oxidase is the component of the respiratory chain that catalyzes the reduction of oxygen to water. Electrons originating from reduced cytochrome c in the intermembrane space (IMS) are transferred via the dinuclear copper A center (CU(A)) of COX2 and heme A of COX1 to the active site in COX1, a binuclear center (BNC) formed by heme A3 and copper B (CU(B)). The BNC reduces molecular oxygen to 2 water molecules using 4 electrons from cytochrome c in the IMS and 4 protons from the mitochondrial matrix. The chain is Cytochrome c oxidase subunit 26, mitochondrial (COX26) from Saccharomyces cerevisiae (strain ATCC 204508 / S288c) (Baker's yeast).